The chain runs to 238 residues: MRPSGRSANQVRPVTLTRNYTKHAEGSVLVAFGDTKVLCTASIEEGVPRFLKGQGQGWITAEYGMLPRATHTRNAREAAKGKQGGRTMEIQRLIARALRAAVDLKVLGEFTITLDCDVIQADGGTRTASITGACVALADALNKLIAAGKLKKNPMKGMVAAVSVGIVNGEALCDLEYVEDSVAETDMNVVMTEDGRIIEVQGTAEGEPFTHEELLTLLALARGGIESIVTTQKAALQN.

Phosphate contacts are provided by residues Arg86 and 124–126 (GTR).

The protein belongs to the RNase PH family. In terms of assembly, homohexameric ring arranged as a trimer of dimers.

It catalyses the reaction tRNA(n+1) + phosphate = tRNA(n) + a ribonucleoside 5'-diphosphate. In terms of biological role, phosphorolytic 3'-5' exoribonuclease that plays an important role in tRNA 3'-end maturation. Removes nucleotide residues following the 3'-CCA terminus of tRNAs; can also add nucleotides to the ends of RNA molecules by using nucleoside diphosphates as substrates, but this may not be physiologically important. Probably plays a role in initiation of 16S rRNA degradation (leading to ribosome degradation) during starvation. The polypeptide is Ribonuclease PH (Enterobacter sp. (strain 638)).